Consider the following 165-residue polypeptide: Hemolysin, heat labile (165 aa).

A disulfide bridge links Cys-151 with Cys-161.

It belongs to the TDH hemolysin family. Homodimer.

In terms of biological role, bacterial hemolysins are exotoxins that attack blood cell membranes and cause cell rupture by mechanisms not clearly defined. The sequence is that of Hemolysin, heat labile from Grimontia hollisae (Vibrio hollisae).